The following is a 383-amino-acid chain: Flagellum-associated coiled-coil domain-containing protein 1 (383 aa).

A disordered region spans residues 26 to 79 (PYPLPKHPTGKFKPVLPPPISKEHNSLLSQPGKSTVSPRDKVQSGNTESSKAPS). Residues 51–77 (SLLSQPGKSTVSPRDKVQSGNTESSKA) are compositionally biased toward polar residues. 2 coiled-coil regions span residues 125–220 (TDII…YLKS) and 276–359 (KKMN…FQTK). Residue K354 is modified to N6-acetyllysine.

In terms of tissue distribution, isoform 1 is specific to germ cells of the testis and localizes to the principal piece of the sperm flagellum. Isoform 2 seems to be expressed mainly in somatic cells of the testis, and is not detected in mature spermatozoa (at protein level). Isoform 2 may also be expressed weakly in brain.

The protein localises to the cytoplasm. The protein resides in the cytoplasmic granule. It localises to the cell projection. It is found in the cilium. Its subcellular location is the flagellum. The polypeptide is Flagellum-associated coiled-coil domain-containing protein 1 (Mus musculus (Mouse)).